The sequence spans 418 residues: Tyrosine--tRNA ligase (418 aa).

Tyrosine 34 serves as a coordination point for L-tyrosine. A 'HIGH' region motif is present at residues 39-48; it reads PTADSLHLGH. Positions 169 and 173 each coordinate L-tyrosine. The 'KMSKS' region motif lies at 229–233; that stretch reads KFGKS. Lysine 232 contributes to the ATP binding site. The S4 RNA-binding domain maps to 352–418; sequence LNLVDMLVTA…GKKKYAVLTY (67 aa).

The protein belongs to the class-I aminoacyl-tRNA synthetase family. TyrS type 1 subfamily. In terms of assembly, homodimer.

The protein localises to the cytoplasm. It carries out the reaction tRNA(Tyr) + L-tyrosine + ATP = L-tyrosyl-tRNA(Tyr) + AMP + diphosphate + H(+). Its function is as follows. Catalyzes the attachment of tyrosine to tRNA(Tyr) in a two-step reaction: tyrosine is first activated by ATP to form Tyr-AMP and then transferred to the acceptor end of tRNA(Tyr). This chain is Tyrosine--tRNA ligase, found in Streptococcus pyogenes serotype M5 (strain Manfredo).